The primary structure comprises 210 residues: Superoxide dismutase [Mn], mitochondrial (210 aa).

Residues H30, H78, D166, and H170 each coordinate Mn(2+).

The protein belongs to the iron/manganese superoxide dismutase family. As to quaternary structure, homotetramer. Requires Mn(2+) as cofactor. In terms of processing, the N-terminus is blocked.

Its subcellular location is the mitochondrion matrix. The enzyme catalyses 2 superoxide + 2 H(+) = H2O2 + O2. Its function is as follows. Destroys superoxide anion radicals which are normally produced within the cells and which are toxic to biological systems. The polypeptide is Superoxide dismutase [Mn], mitochondrial (SOD) (Penicillium chrysogenum (Penicillium notatum)).